The chain runs to 84 residues: U4-theraphotoxin-Hhn1b (84 aa).

An N-terminal signal peptide occupies residues 1–22; the sequence is MKVTLIAILTCAAVLVLHTTAA. Positions 23 to 47 are excised as a propeptide; the sequence is EELEESQLMEVGMPDTELAAVDEER. 3 disulfide bridges follow: cysteine 51–cysteine 65, cysteine 55–cysteine 76, and cysteine 70–cysteine 81.

This sequence belongs to the neurotoxin 12 (Hwtx-2) family. 02 (Hwtx-2) subfamily. As to expression, expressed by the venom gland.

It is found in the secreted. In terms of biological role, postsynaptic neurotoxin. This is U4-theraphotoxin-Hhn1b from Cyriopagopus hainanus (Chinese bird spider).